Here is a 308-residue protein sequence, read N- to C-terminus: uncharacterized protein (308 aa).

Positions 43 to 55 are enriched in polar residues; sequence SQYGTWADQHQNG. The disordered stretch occupies residues 43–289; that stretch reads SQYGTWADQH…KEERSEECSP (247 aa). A Phosphoserine modification is found at S62. The span at 80 to 90 shows a compositional bias: polar residues; sequence HLSSYTESTSV. The span at 91–109 shows a compositional bias: basic and acidic residues; the sequence is EQRDSSRDRRSSSVDRSSS. Polar residues predominate over residues 136-152; sequence IHQTSVLDSSALKTRVQ. Basic residues predominate over residues 153 to 168; the sequence is LSKRSRRRAPISHSLR. A Phosphoserine modification is found at S166. Basic and acidic residues-rich tracts occupy residues 175-186 and 193-216; these read SESRSPLEEESH and DSTEEKSPRRDESDEEPPRVERTP. Phosphoserine occurs at positions 205, 259, 262, and 288.

This is an uncharacterized protein from Mus musculus (Mouse).